The following is a 91-amino-acid chain: Succinate dehydrogenase assembly factor 1A, mitochondrial (91 aa).

This sequence belongs to the complex I LYR family. SDHAF1 subfamily. As to quaternary structure, interacts with the iron-sulfur protein subunit within the SDH catalytic dimer.

It localises to the mitochondrion matrix. In terms of biological role, plays an essential role in the assembly of succinate dehydrogenase (SDH), an enzyme complex (also referred to as respiratory complex II) that is a component of both the tricarboxylic acid (TCA) cycle and the mitochondrial electron transport chain, and which couples the oxidation of succinate to fumarate with the reduction of ubiquinone (coenzyme Q) to ubiquinol. Promotes maturation of the iron-sulfur protein subunit of the SDH catalytic dimer, protecting it from the deleterious effects of oxidants. May act together with SDHAF3. The sequence is that of Succinate dehydrogenase assembly factor 1A, mitochondrial from Dictyostelium discoideum (Social amoeba).